We begin with the raw amino-acid sequence, 1480 residues long: Cystic fibrosis transmembrane conductance regulator (1480 aa).

Residues 1–77 lie on the Cytoplasmic side of the membrane; it reads MQRSPLEKAS…KLINALRRCF (77 aa). The chain crosses the membrane as a helical span at residues 78–98; sequence FWRFMFYGILLYLGEVTKAVQ. Residues 81–365 form the ABC transmembrane type-1 1 domain; the sequence is FMFYGILLYL…WAVQTWYDSL (285 aa). Over 99–122 the chain is Extracellular; the sequence is PLLLGRIIASYDPDNKTERSIAIY. The chain crosses the membrane as a helical span at residues 123–146; it reads LGIGLCLLFIVRTLLLHPAIFGLH. Topologically, residues 147 to 195 are cytoplasmic; that stretch reads HIGMQMRIAMFSLIYKKTLKLSSRVLDKISIGQLVSLLSNNLNKFDEGL. Residues 196-216 traverse the membrane as a helical segment; the sequence is ALAHFVWIAPLQVALLMGLIW. Over 217-222 the chain is Extracellular; sequence ELLQAS. The chain crosses the membrane as a helical span at residues 223-243; that stretch reads AFCGLGFLIVLALFQAGLGRM. The Cytoplasmic segment spans residues 244–298; that stretch reads MMKYRDQRAGKINERLVITSEMIENIQSVKAYCWEEAMEKMIENLRQTELKLTRK. Residues 299-319 form a helical membrane-spanning segment; sequence AAYVRYFNSSAFFFSGFFVVF. Residues 320–339 are Extracellular-facing; the sequence is LSVLPYALIKGIVLRKIFTT. The helical transmembrane segment at 340–358 threads the bilayer; the sequence is ISFCIVLRMAVTRQFPWAV. The Cytoplasmic portion of the chain corresponds to 359-858; the sequence is QTWYDSLGAI…YLRYITLHKS (500 aa). ATP is bound by residues W401, S434, 458–465, and Q493; that span reads GSTGAGKT. Residues 423–646 form the ABC transporter 1 domain; sequence NGDDNLFFSN…RPDFSSKLMG (224 aa). Residue C524 is the site of S-palmitoyl cysteine attachment. Phosphoserine is present on residues S549 and S660. Positions 654–831 are disordered R region; the sequence is SSERRNSILT…EEINEEDLKE (178 aa). At S670 the chain carries Phosphoserine; by PKA. Residue S686 is modified to Phosphoserine. Residue K688 forms a Glycyl lysine isopeptide (Lys-Gly) (interchain with G-Cter in ubiquitin) linkage. 2 positions are modified to phosphoserine: S700 and S712. T717 is subject to Phosphothreonine. Phosphoserine occurs at positions 737, 753, 768, 790, 795, and 813. A helical membrane pass occupies residues 859–879; sequence LIFVLIWCLVIFLAEVAASLV. The 297-residue stretch at 859-1155 folds into the ABC transmembrane type-1 2 domain; sequence LIFVLIWCLV…AVNSSIDVDS (297 aa). The Extracellular portion of the chain corresponds to 880-918; sequence VLWFLGNTPFQDKGNSTYSRNNSYAVIITNTSSYYVFYI. Residues N894, N900, and N909 are each glycosylated (N-linked (GlcNAc...) asparagine). A discontinuously helical transmembrane segment spans residues 919 to 939; sequence YVGVADTLLALGFFRGLPLVH. At 940-990 the chain is on the cytoplasmic side; that stretch reads TLITVSKILHHKMLHSVLQAPMSTLNTLKAGGILNRFSKDIAILDDLLPLT. Residues 991–1011 traverse the membrane as a helical segment; sequence IFDFIQLLLIVIGAIAVVSVL. The Extracellular portion of the chain corresponds to 1012-1013; sequence QP. The helical transmembrane segment at 1014–1034 threads the bilayer; that stretch reads YILLATVPVIAAFILLRAYFL. Over 1035–1095 the chain is Cytoplasmic; sequence QTSQQLKQLE…TANWFLYLAT (61 aa). Residues 1096 to 1116 traverse the membrane as a helical segment; the sequence is LRWFQMRIEIIFVIFFIAVTF. At 1117-1130 the chain is on the extracellular side; that stretch reads ISILTTGEGEGTVG. Residues 1131-1151 traverse the membrane as a helical segment; that stretch reads IILTLAMNIMSTLQWAVNSSI. Residues 1152–1480 are Cytoplasmic-facing; the sequence is DVDSLMRSVS…TEEEVQETRL (329 aa). An ABC transporter 2 domain is found at 1210–1443; that stretch reads MTIKDLTAKY…KSLFQQAISH (234 aa). ATP-binding positions include Y1219 and 1244–1251; that span reads GRTGSGKS. The interaction with GORASP2 stretch occupies residues 1386 to 1480; sequence RALKQAFADC…TEEEVQETRL (95 aa). C1395 is lipidated: S-palmitoyl cysteine. Phosphoserine is present on residues S1444 and S1456. The interval 1452–1480 is disordered; sequence HRNSSKYKSPPQIASLKEETEEEVQETRL. Over residues 1470 to 1480 the composition is skewed to acidic residues; sequence ETEEEVQETRL. Residues 1478 to 1480 carry the PDZ-binding motif; the sequence is TRL.

Belongs to the ABC transporter superfamily. ABCC family. CFTR transporter (TC 3.A.1.202) subfamily. In terms of assembly, monomer; does not require oligomerization for channel activity. May form oligomers in the membrane. Interacts with SLC26A3, SLC26A6 and NHERF1. Interacts with SHANK2. Interacts with MYO6. Interacts (via C-terminus) with GOPC (via PDZ domain); this promotes CFTR internalization and thereby decreases channel activity. Interacts with SLC4A7 through NHERF1. Found in a complex with MYO5B and RAB11A. Interacts with ANO1. Interacts with SLC26A8. Interacts with AHCYL1; the interaction increases CFTR activity. Interacts with CSE1L. The core-glycosylated form interacts with GORASP2 (via PDZ GRASP-type 1 domain) in respone to ER stress. Interacts with MARCHF2; the interaction leads to CFTR ubiqtuitination and degradation. Interacts with ADGRG2. In terms of processing, N-glycosylated. Phosphorylated; cAMP treatment promotes phosphorylation and activates the channel. Dephosphorylation decreases the ATPase activity (in vitro). Phosphorylation at PKA sites activates the channel. Phosphorylation at PKC sites enhances the response to phosphorylation by PKA. Phosphorylated by AMPK; this inhibits channel activity. Post-translationally, ubiquitinated, leading to its degradation in the lysosome. Deubiquitination by USP10 in early endosomes enhances its endocytic recycling to the cell membrane. Ubiquitinated by RNF185 during ER stress. Ubiquitinated by MARCHF2.

It localises to the apical cell membrane. It is found in the early endosome membrane. The protein localises to the cell membrane. Its subcellular location is the recycling endosome membrane. The protein resides in the endoplasmic reticulum membrane. It localises to the nucleus. The catalysed reaction is ATP + H2O + closed Cl(-) channel = ADP + phosphate + open Cl(-) channel.. It catalyses the reaction chloride(in) = chloride(out). It carries out the reaction hydrogencarbonate(in) = hydrogencarbonate(out). The enzyme catalyses ATP + H2O = ADP + phosphate + H(+). In terms of biological role, epithelial ion channel that plays an important role in the regulation of epithelial ion and water transport and fluid homeostasis. Mediates the transport of chloride ions across the cell membrane. Possesses an intrinsic ATPase activity and utilizes ATP to gate its channel; the passive flow of anions through the channel is gated by cycles of ATP binding and hydrolysis by the ATP-binding domains. The ion channel is also permeable to HCO(3)(-); selectivity depends on the extracellular chloride concentration. Exerts its function also by modulating the activity of other ion channels and transporters. Contributes to the regulation of the pH and the ion content of the epithelial fluid layer. Modulates the activity of the epithelial sodium channel (ENaC) complex, in part by regulating the cell surface expression of the ENaC complex. May regulate bicarbonate secretion and salvage in epithelial cells by regulating the transporter SLC4A7. Can inhibit the chloride channel activity of ANO1. Plays a role in the chloride and bicarbonate homeostasis during sperm epididymal maturation and capacitation. This is Cystic fibrosis transmembrane conductance regulator from Ateles geoffroyi (Black-handed spider monkey).